The following is a 101-amino-acid chain: Small ribosomal subunit protein uS10 (101 aa).

It belongs to the universal ribosomal protein uS10 family. In terms of assembly, part of the 30S ribosomal subunit.

Functionally, involved in the binding of tRNA to the ribosomes. This is Small ribosomal subunit protein uS10 from Bacteroides fragilis (strain ATCC 25285 / DSM 2151 / CCUG 4856 / JCM 11019 / LMG 10263 / NCTC 9343 / Onslow / VPI 2553 / EN-2).